The following is a 1170-amino-acid chain: DNA-directed RNA polymerase subunit beta' (1170 aa).

The Zn(2+) site is built by Cys60, Cys62, Cys75, and Cys78. The Mg(2+) site is built by Asp449, Asp451, and Asp453. Zn(2+) contacts are provided by Cys774, Cys848, Cys855, and Cys858. A disordered region spans residues 1145–1170 (EPGEENGEPGGERLYGMDELYGETAN).

This sequence belongs to the RNA polymerase beta' chain family. As to quaternary structure, the RNAP catalytic core consists of 2 alpha, 1 beta, 1 beta' and 1 omega subunit. When a sigma factor is associated with the core the holoenzyme is formed, which can initiate transcription. Mg(2+) serves as cofactor. The cofactor is Zn(2+).

The enzyme catalyses RNA(n) + a ribonucleoside 5'-triphosphate = RNA(n+1) + diphosphate. In terms of biological role, DNA-dependent RNA polymerase catalyzes the transcription of DNA into RNA using the four ribonucleoside triphosphates as substrates. The sequence is that of DNA-directed RNA polymerase subunit beta' from Pelotomaculum thermopropionicum (strain DSM 13744 / JCM 10971 / SI).